A 450-amino-acid polypeptide reads, in one-letter code: Sorting nexin-4 (450 aa).

At Met1 the chain carries N-acetylmethionine. The interval 1–46 is disordered; the sequence is MEQAPPDPERQLQPAPLEPLGSPDAVLGAAVGKETEGAGEESSGVD. Ser22 bears the Phosphoserine mark. The region spanning 61–187 is the PX domain; sequence SVSEAEKRTG…YLFLTQEGNW (127 aa). 4 residues coordinate a 1,2-diacyl-sn-glycero-3-phospho-(1D-myo-inositol-3-phosphate): Arg106, Ser108, Lys132, and Arg154.

It belongs to the sorting nexin family. Heterodimer; heterodimerizes with SNX7 or SNX30. Interacts with WWC1/KIBRA. Identified in a complex with WWC1/KIBRA and dynein components DYNLL1 and DYNC1I2. Interacts with BIN1.

It localises to the early endosome. It is found in the early endosome membrane. Involved in the regulation of endocytosis and in several stages of intracellular trafficking. Plays a role in recycling endocytosed transferrin receptor and prevent its degradation. Involved in autophagosome assembly by regulating trafficking and recycling of phospholipid scramblase ATG9A. This is Sorting nexin-4 from Pongo abelii (Sumatran orangutan).